The chain runs to 119 residues: Large ribosomal subunit protein uL18 (119 aa).

It belongs to the universal ribosomal protein uL18 family. Part of the 50S ribosomal subunit; part of the 5S rRNA/L5/L18/L25 subcomplex. Contacts the 5S and 23S rRNAs.

In terms of biological role, this is one of the proteins that bind and probably mediate the attachment of the 5S RNA into the large ribosomal subunit, where it forms part of the central protuberance. The polypeptide is Large ribosomal subunit protein uL18 (Mesorhizobium japonicum (strain LMG 29417 / CECT 9101 / MAFF 303099) (Mesorhizobium loti (strain MAFF 303099))).